The following is a 983-amino-acid chain: Glycine dehydrogenase (decarboxylating) (983 aa).

Lys-726 carries the N6-(pyridoxal phosphate)lysine modification.

It belongs to the GcvP family. The glycine cleavage system is composed of four proteins: P, T, L and H. Requires pyridoxal 5'-phosphate as cofactor.

It carries out the reaction N(6)-[(R)-lipoyl]-L-lysyl-[glycine-cleavage complex H protein] + glycine + H(+) = N(6)-[(R)-S(8)-aminomethyldihydrolipoyl]-L-lysyl-[glycine-cleavage complex H protein] + CO2. In terms of biological role, the glycine cleavage system catalyzes the degradation of glycine. The P protein binds the alpha-amino group of glycine through its pyridoxal phosphate cofactor; CO(2) is released and the remaining methylamine moiety is then transferred to the lipoamide cofactor of the H protein. The protein is Glycine dehydrogenase (decarboxylating) of Synechocystis sp. (strain ATCC 27184 / PCC 6803 / Kazusa).